The chain runs to 309 residues: UDP-URONIC ACID TRANSPORTER 1 (309 aa).

The next 10 membrane-spanning stretches (helical) occupy residues 9 to 29 (TLFI…VLLL), 43 to 63 (IFLT…SIVF), 78 to 98 (FLKV…GNIS), 104 to 124 (VSFN…FAYL), 131 to 151 (AWVT…ASGG), 152 to 172 (EPGF…ARAF), 193 to 213 (LMLY…LFME), 231 to 251 (WILL…NFLV), 256 to 278 (SALT…SILI), and 283 to 302 (VTVM…VAYG).

The protein belongs to the TPT transporter family. TPT (TC 2.A.7.9) subfamily. As to expression, ubiquitous.

It localises to the golgi apparatus membrane. Its function is as follows. UDP-glucuronic acid transporter that modulates the polysaccharide composition of seed mucilage. Transports UDP-glucuronic acid (UDP-GlcA) and UDP-galacturonic acid (UDP-GalA) in vitro. The polypeptide is UDP-URONIC ACID TRANSPORTER 1 (Arabidopsis thaliana (Mouse-ear cress)).